A 238-amino-acid chain; its full sequence is Protein TIFY 3A (238 aa).

Residues 39 to 74 (EPDASTQLTIIFGGSCRVFNGVPAQKVQEIIRIAFA) enclose the Tify 1 domain. The short motif at 101–120 (PIARRRSLQRFLEKRRDRST) is the Jas 1 element. Positions 103–110 (ARRRSLQR) match the Nuclear localization signal 1 motif. The 36-residue stretch at 125 to 160 (SMILPSQLTIIFGGSFSVFDGIPAEKVQEILHIAAA) folds into the Tify 2 domain. Positions 197–222 (PIARRRSLQRFFEKRRHRFVHTKPYS) match the Jas 2 motif. Positions 199–206 (ARRRSLQR) match the Nuclear localization signal 2 motif. Positions 219-238 (KPYSATTSEADKNETSPIVT) are disordered.

This sequence belongs to the TIFY/JAZ family. Interacts with MYC2, MYB21, MYB24, AFPH2/NINJA, TIFY10A/JAZ1, TIFY10B/JAZ2, TIFY6B/JAZ3, TIFY6A/JAZ4, TIFY7/JAZ9 and TIFY9/JAZ10. In terms of processing, ubiquitinated. Targeted for degradation by the SCF(COI1) E3 ubiquitin ligase-proteasome pathway during jasmonate signaling.

It localises to the nucleus. Its function is as follows. Repressor of jasmonate (JA) responses. Targets MYC2, MYC3 and MYC4 that are JA-dependent transcription activators. The sequence is that of Protein TIFY 3A (TIFY3A) from Arabidopsis thaliana (Mouse-ear cress).